The following is a 184-amino-acid chain: Photosystem I assembly protein Ycf4 (184 aa).

Transmembrane regions (helical) follow at residues 22–42 and 57–77; these read FCWA…GTSS and IVFF…LFIS.

Belongs to the Ycf4 family.

The protein resides in the plastid. It is found in the chloroplast thylakoid membrane. Seems to be required for the assembly of the photosystem I complex. The sequence is that of Photosystem I assembly protein Ycf4 from Lactuca sativa (Garden lettuce).